We begin with the raw amino-acid sequence, 337 residues long: Glyceraldehyde-3-phosphate dehydrogenase (337 aa).

Residues 12–13, Asp-34, and Lys-79 contribute to the NAD(+) site; that span reads RI. D-glyceraldehyde 3-phosphate contacts are provided by residues 150-152, Thr-181, 210-211, and Arg-233; these read SCT and TG. Cys-151 serves as the catalytic Nucleophile. Asn-315 is an NAD(+) binding site.

Belongs to the glyceraldehyde-3-phosphate dehydrogenase family. In terms of assembly, homotetramer. In terms of tissue distribution, expressed in all tissues examined.

It is found in the cytoplasm. The enzyme catalyses D-glyceraldehyde 3-phosphate + phosphate + NAD(+) = (2R)-3-phospho-glyceroyl phosphate + NADH + H(+). It participates in carbohydrate degradation; glycolysis; pyruvate from D-glyceraldehyde 3-phosphate: step 1/5. This chain is Glyceraldehyde-3-phosphate dehydrogenase (gpd), found in Lentinula edodes (Shiitake mushroom).